The following is a 197-amino-acid chain: Peptide deformylase (197 aa).

Fe cation is bound by residues Cys-106 and His-148. Residue Glu-149 is part of the active site. His-152 provides a ligand contact to Fe cation.

This sequence belongs to the polypeptide deformylase family. Fe(2+) serves as cofactor.

It carries out the reaction N-terminal N-formyl-L-methionyl-[peptide] + H2O = N-terminal L-methionyl-[peptide] + formate. Its function is as follows. Removes the formyl group from the N-terminal Met of newly synthesized proteins. Requires at least a dipeptide for an efficient rate of reaction. N-terminal L-methionine is a prerequisite for activity but the enzyme has broad specificity at other positions. The polypeptide is Peptide deformylase (Mycobacterium sp. (strain JLS)).